Reading from the N-terminus, the 332-residue chain is Ubiquinone biosynthesis protein COQ4, mitochondrial (332 aa).

Residues methionine 1–phenylalanine 24 constitute a mitochondrion transit peptide. Residues histidine 210, aspartate 211, histidine 214, and glutamate 226 each contribute to the Zn(2+) site.

The protein belongs to the COQ4 family. Component of a multi-subunit COQ enzyme complex, composed of at least COQ3, COQ4, COQ5, COQ6, COQ7 and COQ9. It depends on Zn(2+) as a cofactor.

It is found in the mitochondrion inner membrane. The enzyme catalyses a 4-hydroxy-3-methoxy-5-(all-trans-polyprenyl)benzoate + H(+) = a 2-methoxy-6-(all-trans-polyprenyl)phenol + CO2. It functions in the pathway cofactor biosynthesis; ubiquinone biosynthesis. In terms of biological role, lyase that catalyzes the C1-decarboxylation of 4-hydroxy-3-methoxy-5-(all-trans-polyprenyl)benzoic acid into 2-methoxy-6-(all-trans-polyprenyl)phenol during ubiquinone biosynthesis. This chain is Ubiquinone biosynthesis protein COQ4, mitochondrial, found in Zygosaccharomyces rouxii (strain ATCC 2623 / CBS 732 / NBRC 1130 / NCYC 568 / NRRL Y-229).